A 368-amino-acid chain; its full sequence is DNA replication and repair protein RecF (368 aa).

Residue 30 to 37 participates in ATP binding; it reads GNNAQGKT.

Belongs to the RecF family.

It localises to the cytoplasm. In terms of biological role, the RecF protein is involved in DNA metabolism; it is required for DNA replication and normal SOS inducibility. RecF binds preferentially to single-stranded, linear DNA. It also seems to bind ATP. This chain is DNA replication and repair protein RecF, found in Streptococcus pyogenes serotype M18 (strain MGAS8232).